A 375-amino-acid chain; its full sequence is Succinyl-diaminopimelate desuccinylase (375 aa).

Residue H66 participates in Zn(2+) binding. D68 is an active-site residue. D99 lines the Zn(2+) pocket. The active-site Proton acceptor is E133. Positions 134, 162, and 348 each coordinate Zn(2+).

This sequence belongs to the peptidase M20A family. DapE subfamily. As to quaternary structure, homodimer. It depends on Zn(2+) as a cofactor. Co(2+) is required as a cofactor.

It catalyses the reaction N-succinyl-(2S,6S)-2,6-diaminopimelate + H2O = (2S,6S)-2,6-diaminopimelate + succinate. Its pathway is amino-acid biosynthesis; L-lysine biosynthesis via DAP pathway; LL-2,6-diaminopimelate from (S)-tetrahydrodipicolinate (succinylase route): step 3/3. Catalyzes the hydrolysis of N-succinyl-L,L-diaminopimelic acid (SDAP), forming succinate and LL-2,6-diaminopimelate (DAP), an intermediate involved in the bacterial biosynthesis of lysine and meso-diaminopimelic acid, an essential component of bacterial cell walls. In Serratia proteamaculans (strain 568), this protein is Succinyl-diaminopimelate desuccinylase.